Reading from the N-terminus, the 145-residue chain is Ubiquitin-conjugating enzyme E2 variant 1C (145 aa).

The region spanning 12–145 (PRNFRLLEEL…LVQPPEGTFF (134 aa)) is the UBC core domain.

It belongs to the ubiquitin-conjugating enzyme family. As to quaternary structure, heterodimer with UBC35 or UBC36. Expressed in roots, shoots, leaves, stems and flowers, but not in pollen.

Its function is as follows. Has no ubiquitin ligase activity on its own. The heterodimer with UBC catalyzes the synthesis of non-canonical poly-ubiquitin chains that are linked through 'Lys-63'. This type of poly-ubiquitination does not lead to protein degradation by the proteasome. Mediates transcriptional activation of target genes. May play a role in the control of progress through the cell cycle and differentiation. May play a role in the error-free DNA repair pathway and contributes to the survival of cells after DNA damage. The polypeptide is Ubiquitin-conjugating enzyme E2 variant 1C (UEV1C) (Arabidopsis thaliana (Mouse-ear cress)).